The following is a 77-amino-acid chain: Acyl carrier protein (77 aa).

One can recognise a Carrier domain in the interval 2–77 (SNIEERVKKI…AAIDYVNSAQ (76 aa)). At S37 the chain carries O-(pantetheine 4'-phosphoryl)serine.

Belongs to the acyl carrier protein (ACP) family. Post-translationally, 4'-phosphopantetheine is transferred from CoA to a specific serine of apo-ACP by AcpS. This modification is essential for activity because fatty acids are bound in thioester linkage to the sulfhydryl of the prosthetic group.

Its subcellular location is the cytoplasm. It functions in the pathway lipid metabolism; fatty acid biosynthesis. Functionally, carrier of the growing fatty acid chain in fatty acid biosynthesis. This is Acyl carrier protein from Vibrio campbellii (strain ATCC BAA-1116).